A 56-amino-acid chain; its full sequence is Small ribosomal subunit protein uS14 (56 aa).

Zn(2+)-binding residues include C21, C24, C39, and C42.

This sequence belongs to the universal ribosomal protein uS14 family. As to quaternary structure, component of the 40S small ribosomal subunit. Zn(2+) serves as cofactor.

It localises to the cytoplasm. The protein resides in the cytosol. The protein localises to the rough endoplasmic reticulum. The chain is Small ribosomal subunit protein uS14 (RpS29) from Scarabaeus laticollis (Scarab dung beetle).